The sequence spans 251 residues: NADPH-dependent oxidoreductase (251 aa).

It belongs to the flavin oxidoreductase frp family. Requires FMN as cofactor.

Reduces FMN, organic nitro compounds and disulfide DTNB. Involved in maintenance of the cellular redox state and the disulfide stress response. The protein is NADPH-dependent oxidoreductase (nfrA) of Staphylococcus haemolyticus (strain JCSC1435).